The following is a 250-amino-acid chain: Copper homeostasis protein cutC homolog (250 aa).

The protein belongs to the CutC family.

In terms of biological role, involved in copper homeostasis. Affects body morphology and length, egg laying and brood size. The protein is Copper homeostasis protein cutC homolog (cutc-1) of Caenorhabditis elegans.